A 458-amino-acid chain; its full sequence is tRNA modification GTPase MnmE (458 aa).

(6S)-5-formyl-5,6,7,8-tetrahydrofolate is bound by residues Arg-26, Glu-88, and Arg-127. In terms of domain architecture, TrmE-type G spans 224-378; the sequence is GLSTAIIGRP…IEDRINQLFF (155 aa). Residue Asn-234 coordinates K(+). Residues 234-239, 253-259, and 278-281 each bind GTP; these read NVGKSS, TDIAGTT, and DTAG. Position 238 (Ser-238) interacts with Mg(2+). K(+) is bound by residues Thr-253, Ile-255, and Thr-258. Residue Thr-259 coordinates Mg(2+). Position 458 (Lys-458) interacts with (6S)-5-formyl-5,6,7,8-tetrahydrofolate.

The protein belongs to the TRAFAC class TrmE-Era-EngA-EngB-Septin-like GTPase superfamily. TrmE GTPase family. As to quaternary structure, homodimer. Heterotetramer of two MnmE and two MnmG subunits. It depends on K(+) as a cofactor.

It is found in the cytoplasm. Exhibits a very high intrinsic GTPase hydrolysis rate. Involved in the addition of a carboxymethylaminomethyl (cmnm) group at the wobble position (U34) of certain tRNAs, forming tRNA-cmnm(5)s(2)U34. The protein is tRNA modification GTPase MnmE of Streptococcus pyogenes serotype M18 (strain MGAS8232).